The primary structure comprises 135 residues: uncharacterized protein (135 aa).

A HotDog ACOT-type domain is found at 8-123 (PKGIIVLKTL…IFIYVAINKT (116 aa)).

It belongs to the acyl coenzyme A hydrolase family.

This is an uncharacterized protein from Buchnera aphidicola subsp. Acyrthosiphon pisum (strain APS) (Acyrthosiphon pisum symbiotic bacterium).